A 255-amino-acid polypeptide reads, in one-letter code: MMTAEVRTPEQGGGPLTTEPRAPRSAPGHADASAPAFGPETDPRDIIRWALAAHPDLLMPSAFNLNGVVLLDLAAQAGYRGEVVFVDTGYHFPETLATRDRLESRYPELTFVTLNAGASPDDGQTPPDLYASDPDACCAARKVDPLQRYLKEQGPSALLNARSRDQASTRADIPFVEEGGARRRVNPLAHWTREQLEAYAAEHDLPVNPLYFDGFLSIGCWPCTRAVKPGEDARAGRWAGKGKTECGLWQGENKL.

A disordered region spans residues 1 to 39 (MMTAEVRTPEQGGGPLTTEPRAPRSAPGHADASAPAFGP). [4Fe-4S] cluster contacts are provided by C137, C138, C220, and C223. C246 functions as the Nucleophile; cysteine thiosulfonate intermediate in the catalytic mechanism.

Belongs to the PAPS reductase family. CysH subfamily. Requires [4Fe-4S] cluster as cofactor.

Its subcellular location is the cytoplasm. The catalysed reaction is [thioredoxin]-disulfide + sulfite + AMP + 2 H(+) = adenosine 5'-phosphosulfate + [thioredoxin]-dithiol. It participates in sulfur metabolism; hydrogen sulfide biosynthesis; sulfite from sulfate. Its function is as follows. Catalyzes the formation of sulfite from adenosine 5'-phosphosulfate (APS) using thioredoxin as an electron donor. The polypeptide is Adenosine 5'-phosphosulfate reductase (Deinococcus radiodurans (strain ATCC 13939 / DSM 20539 / JCM 16871 / CCUG 27074 / LMG 4051 / NBRC 15346 / NCIMB 9279 / VKM B-1422 / R1)).